The sequence spans 205 residues: Small ribosomal subunit protein uS4 (205 aa).

Positions 25–48 (KTIEARPTPPGQHGAKNTRRKKSD) are disordered. Positions 94-157 (RRLDNVVFRA…TKLPIVVETL (64 aa)) constitute an S4 RNA-binding domain.

It belongs to the universal ribosomal protein uS4 family. In terms of assembly, part of the 30S ribosomal subunit. Contacts protein S5. The interaction surface between S4 and S5 is involved in control of translational fidelity.

In terms of biological role, one of the primary rRNA binding proteins, it binds directly to 16S rRNA where it nucleates assembly of the body of the 30S subunit. With S5 and S12 plays an important role in translational accuracy. The protein is Small ribosomal subunit protein uS4 of Methylobacillus flagellatus (strain ATCC 51484 / DSM 6875 / VKM B-1610 / KT).